The chain runs to 370 residues: Aminomethyltransferase (370 aa).

This sequence belongs to the GcvT family. The glycine cleavage system is composed of four proteins: P, T, L and H.

It catalyses the reaction N(6)-[(R)-S(8)-aminomethyldihydrolipoyl]-L-lysyl-[protein] + (6S)-5,6,7,8-tetrahydrofolate = N(6)-[(R)-dihydrolipoyl]-L-lysyl-[protein] + (6R)-5,10-methylene-5,6,7,8-tetrahydrofolate + NH4(+). Functionally, the glycine cleavage system catalyzes the degradation of glycine. This chain is Aminomethyltransferase, found in Clostridium botulinum (strain Loch Maree / Type A3).